A 199-amino-acid chain; its full sequence is Small ribosomal subunit protein uS4 (199 aa).

In terms of domain architecture, S4 RNA-binding spans 91-154 (SRLDNLVYRM…RGLQLIKDAL (64 aa)).

It belongs to the universal ribosomal protein uS4 family. As to quaternary structure, part of the 30S ribosomal subunit. Contacts protein S5. The interaction surface between S4 and S5 is involved in control of translational fidelity.

Functionally, one of the primary rRNA binding proteins, it binds directly to 16S rRNA where it nucleates assembly of the body of the 30S subunit. In terms of biological role, with S5 and S12 plays an important role in translational accuracy. This chain is Small ribosomal subunit protein uS4, found in Brevibacillus brevis (strain 47 / JCM 6285 / NBRC 100599).